The following is a 1706-amino-acid chain: 5'-3' exoribonuclease 1 (1706 aa).

At S1348 the chain carries Phosphoserine. The segment at 1619-1706 (ENKEAQSSQA…VNFGVSKPSE (88 aa)) is disordered. The segment covering 1623–1642 (AQSSQATPVQTSQPDSSNIV) has biased composition (polar residues). Phosphoserine is present on S1645. A compositionally biased stretch (low complexity) spans 1647-1657 (RESSSASLKSS). A compositionally biased stretch (polar residues) spans 1658–1676 (PIAQPASSFQVETASQGHS). A compositionally biased stretch (basic residues) spans 1677 to 1694 (ISHHKSTPISSSRRKSRK).

Belongs to the 5'-3' exonuclease family. As to quaternary structure, found in a mRNP complex with UPF1, UPF2, UPF3B and XRN1. Associates with alpha and beta tubulins. Interacts with DIS3L2. Interacts with ZC3HAV1 in an RNA-dependent manner. Interacts with ZFP36L1. Interacts with TRIM71 (via NHL repeats) in an RNA-dependent manner. Interacts with YTHDC2 (via ANK repeats). Interacts with DHX34; the interaction is RNA-independent. In terms of tissue distribution, expressed in heart, brain, pancreas, spleen, testis, osteogenic sarcoma (OGS) biopsy and primary cell lines.

The protein localises to the cytoplasm. In terms of biological role, major 5'-3' exoribonuclease involved in mRNA decay. Required for the 5'-3'-processing of the G4 tetraplex-containing DNA and RNA substrates. The kinetic of hydrolysis is faster for G4 RNA tetraplex than for G4 DNA tetraplex and monomeric RNA tetraplex. Binds to RNA and DNA. Plays a role in replication-dependent histone mRNA degradation. May act as a tumor suppressor protein in osteogenic sarcoma (OGS). The protein is 5'-3' exoribonuclease 1 of Homo sapiens (Human).